The following is a 493-amino-acid chain: Fizzy-related protein homolog (493 aa).

Disordered stretches follow at residues 31–51, 64–88, and 105–166; these read LTPA…FIPS, INEN…GKDG, and EKVQ…SPRK. Residue Thr-32 is modified to Phosphothreonine. The span at 32–42 shows a compositional bias: polar residues; sequence TPANSPVSSPS. The residue at position 36 (Ser-36) is a Phosphoserine. At Lys-69 the chain carries N6-acetyllysine. Composition is skewed to basic and acidic residues over residues 76 to 86 and 106 to 126; these read KAKDATSDNGK and KVQD…EHKG. Phosphoserine occurs at positions 133, 138, 146, and 151. The span at 146–160 shows a compositional bias: polar residues; it reads SPYSLSPVSNKSQKL. Lys-159 is modified (N6-acetyllysine). 7 WD repeats span residues 182-222, 227-266, 269-306, 311-350, 353-395, 397-438, and 441-480; these read PELQ…VTRL, VEGD…KLSM, GHTA…LQSE, GHRQ…PVQQ, EHLA…PLQC, DTGS…QVAK, and GHSY…RSTK.

It belongs to the WD repeat CDC20/Fizzy family. The unphosphorylated form interacts with APC/C during mitosis. Interacts with NINL. Interacts (in complex with the anaphase promoting complex APC) with MAD2L2; inhibits FZR1-mediated APC/C activation. Interacts with SIRT2. Interacts with USP37. Interacts (via WD repeats) with MAK. Interacts with RBBP8/CtIP; this interaction leads to RBBP8 proteasomal degradation. Interacts with HECW2. Interacts with SASS6; the interaction is regulated by CENATAC and leads to SASS6 proteasomal degradation. Interacts (via N-terminus) with CCNF. Interacts with CDC6. Interacts with TK1 (via the KEN box). In terms of processing, acetylated. Deacetylated by SIRT2 at Lys-69 and Lys-159; deacetylation enhances the interaction of FZR1 with CDC27, leading to activation of anaphase promoting complex/cyclosome (APC/C). Following DNA damage, it is dephosphorylated by CDC14B in G2 phase, leading to its reassociation with the APC/C, and allowing an efficient G2 DNA damage checkpoint. Phosphorylated by MAK.

It participates in protein modification; protein ubiquitination. Its function is as follows. Substrate-specific adapter for the anaphase promoting complex/cyclosome (APC/C) E3 ubiquitin-protein ligase complex. Associates with the APC/C in late mitosis, in replacement of CDC20, and activates the APC/C during anaphase and telophase. The APC/C remains active in degrading substrates to ensure that positive regulators of the cell cycle do not accumulate prematurely. At the G1/S transition FZR1 is phosphorylated, leading to its dissociation from the APC/C. Following DNA damage, it is required for the G2 DNA damage checkpoint: its dephosphorylation and reassociation with the APC/C leads to the ubiquitination of PLK1, preventing entry into mitosis. Acts as an adapter for APC/C to target the DNA-end resection factor RBBP8/CtIP for ubiquitination and subsequent proteasomal degradation. Through the regulation of RBBP8/CtIP protein turnover, may play a role in DNA damage response, favoring DNA double-strand repair through error-prone non-homologous end joining (NHEJ) over error-free, RBBP8-mediated homologous recombination (HR). The protein is Fizzy-related protein homolog (Fzr1) of Mus musculus (Mouse).